A 975-amino-acid chain; its full sequence is C-1-tetrahydrofolate synthase, mitochondrial (975 aa).

Residues 1–34 constitute a mitochondrion transit peptide; the sequence is MLSRLSLLSNSRAFQQARWRIYRLKVSPTVHASQ. The methylenetetrahydrofolate dehydrogenase and cyclohydrolase stretch occupies residues 35-343; that stretch reads YHILSGRKLA…KPLPLHLESP (309 aa). Substrate-binding positions include 83–87 and 130–132; these read YVRMK and IQL. Residues 201–203 and Ser226 each bind NADP(+); that span reads GRS. 301–305 contacts substrate; that stretch reads PGGVG. The tract at residues 344–975 is formyltetrahydrofolate synthetase; the sequence is VPSDIDISRA…DDDGEIEGLF (632 aa). Residue 408–415 coordinates ATP; it reads TPLGEGKS.

In the N-terminal section; belongs to the tetrahydrofolate dehydrogenase/cyclohydrolase family. It in the C-terminal section; belongs to the formate--tetrahydrofolate ligase family. In terms of assembly, homodimer.

It localises to the mitochondrion. The catalysed reaction is (6R)-5,10-methylene-5,6,7,8-tetrahydrofolate + NADP(+) = (6R)-5,10-methenyltetrahydrofolate + NADPH. It catalyses the reaction (6R)-5,10-methenyltetrahydrofolate + H2O = (6R)-10-formyltetrahydrofolate + H(+). It carries out the reaction (6S)-5,6,7,8-tetrahydrofolate + formate + ATP = (6R)-10-formyltetrahydrofolate + ADP + phosphate. It participates in one-carbon metabolism; tetrahydrofolate interconversion. Mitochondrial isozyme of C-1-tetrahydrofolate synthase. The trifunctional enzyme catalyzes the interconversion of the one-carbon derivatives of tetrahydrofolate (THF) between different oxidation states by the enzymatic activities 10-formyltetrahydrofolate synthetase, 5,lO-methenyltetrahydrofolate cyclohydrolase, and 5,lO-methylenetetrahydrofolate dehydrogenase. The protein is C-1-tetrahydrofolate synthase, mitochondrial of Saccharomyces cerevisiae (strain ATCC 204508 / S288c) (Baker's yeast).